Reading from the N-terminus, the 91-residue chain is RNA-binding protein Hfq (91 aa).

The Sm domain maps to 9-69 (DRFLNMLRTG…ISTIMPSSFV (61 aa)).

It belongs to the Hfq family. Homohexamer.

RNA chaperone that binds small regulatory RNA (sRNAs) and mRNAs to facilitate mRNA translational regulation in response to envelope stress, environmental stress and changes in metabolite concentrations. Also binds with high specificity to tRNAs. In Pseudothermotoga lettingae (strain ATCC BAA-301 / DSM 14385 / NBRC 107922 / TMO) (Thermotoga lettingae), this protein is RNA-binding protein Hfq.